We begin with the raw amino-acid sequence, 256 residues long: Probable galactose dehydrogenase GalD (256 aa).

NAD(+) is bound by residues 20 to 23 (GGGS), 71 to 72 (DL), and N98. A substrate-binding site is contributed by S150. The active-site Proton acceptor is the Y163. NAD(+) is bound by residues 163-167 (YSTAK) and I196.

This sequence belongs to the short-chain dehydrogenases/reductases (SDR) family.

Involved in the degradation of galactose via the DeLey-Doudoroff pathway. Catalyzes the oxidation of galactose in the presence of NAD(+). Uses NAD(+) as a hydrogen acceptor more efficiently than NADP(+). The polypeptide is Probable galactose dehydrogenase GalD (galD) (Rhizobium meliloti (strain 1021) (Ensifer meliloti)).